Reading from the N-terminus, the 556-residue chain is Sensory neuron membrane protein 2 (556 aa).

Over 1–6 the chain is Cytoplasmic; that stretch reads MIHWSL. Residues 7–27 form a helical membrane-spanning segment; it reads IVSALGVCVAVLGGYCGWILF. The Extracellular segment spans residues 28 to 522; it reads PNMVHKKVEQ…KLINTLKTLN (495 aa). 4 N-linked (GlcNAc...) asparagine glycosylation sites follow: asparagine 66, asparagine 274, asparagine 310, and asparagine 324. Cystine bridges form between cysteine 320–cysteine 388 and cysteine 349–cysteine 415. Residues 523–543 traverse the membrane as a helical segment; sequence IVHWATLCGGIGVAVACLIYY. Residues 544–556 lie on the Cytoplasmic side of the membrane; it reads IYQRGRVVEPPVK.

Belongs to the CD36 family. Detected in the head and to a lesser extent in legs and wings.

The protein localises to the cell membrane. In terms of biological role, plays an olfactory role that is not restricted to pheromone sensitivity. The chain is Sensory neuron membrane protein 2 from Drosophila melanogaster (Fruit fly).